Reading from the N-terminus, the 360-residue chain is Alpha-methylacyl-CoA racemase (360 aa).

Residues R38, 59–62 (ADLK), 83–85 (GYR), R91, and 125–130 (GHDINY) contribute to the substrate site. Catalysis depends on H126, which acts as the Proton acceptor. D156 acts as the Proton donor in catalysis.

Belongs to the CoA-transferase III family. In terms of assembly, homodimer.

The enzyme catalyses a (2S)-2-methylacyl-CoA = a (2R)-2-methylacyl-CoA. It catalyses the reaction (2S)-2-methyltetradecanoyl-CoA = (2R)-2-methyltetradecanoyl-CoA. It carries out the reaction (2R)-pristanoyl-CoA = (2S)-pristanoyl-CoA. The catalysed reaction is (25S)-3-oxocholest-4-en-26-oyl-CoA = (25R)-3-oxocholest-4-en-26-oyl-CoA. The enzyme catalyses (2S)-ibuprofenoyl-CoA = (2R)-ibuprofenoyl-CoA. Its activity is regulated as follows. Inactivated by N,N-dialkylcarbamoyl-CoA substrate-product analogs. Its function is as follows. Catalyzes the epimerization of (2R)- and (2S)-methylacyl-coenzyme A (CoA) thioesters. Accepts as substrates a wide range of alpha-methylacyl-CoAs, including (2R)-2-methylmyristoyl-CoA and (2S)-2-methylmyristoyl-CoA, (2R)-pristanoyl-CoA and (2S)-pristanoyl-CoA, and the cholesterol esters (25R)-3-oxo-cholest-4-en-26-oyl-CoA and (25S)-3-oxo-cholest-4-en-26-oyl-CoA. Can also catalyze the interconversion of the non-physiologic substrates (2R)-ibuprofenoyl-CoA and (2S)-ibuprofenoyl-CoA, which are potential competitive inhibitors of the enzyme. The chain is Alpha-methylacyl-CoA racemase from Mycobacterium tuberculosis (strain ATCC 25618 / H37Rv).